A 228-amino-acid polypeptide reads, in one-letter code: Mediator of RNA polymerase II transcription subunit 7-A (228 aa).

Belongs to the Mediator complex subunit 7 family. Component of the Mediator complex.

The protein resides in the nucleus. Its function is as follows. Component of the Mediator complex, a coactivator involved in the regulated transcription of nearly all RNA polymerase II-dependent genes. Mediator functions as a bridge to convey information from gene-specific regulatory proteins to the basal RNA polymerase II transcription machinery. Mediator is recruited to promoters by direct interactions with regulatory proteins and serves as a scaffold for the assembly of a functional preinitiation complex with RNA polymerase II and the general transcription factors. The chain is Mediator of RNA polymerase II transcription subunit 7-A (med7-a) from Xenopus laevis (African clawed frog).